We begin with the raw amino-acid sequence, 92 residues long: Small ribosomal subunit protein uS19 (92 aa).

Belongs to the universal ribosomal protein uS19 family.

Functionally, protein S19 forms a complex with S13 that binds strongly to the 16S ribosomal RNA. The chain is Small ribosomal subunit protein uS19 from Bradyrhizobium diazoefficiens (strain JCM 10833 / BCRC 13528 / IAM 13628 / NBRC 14792 / USDA 110).